A 199-amino-acid polypeptide reads, in one-letter code: CASP-like protein 4B1 (199 aa).

A disordered region spans residues 1–32; it reads MAMVASPDDIVKSPLPPPPPPPPPPLPPAHKD. Residues 1–53 lie on the Cytoplasmic side of the membrane; that stretch reads MAMVASPDDIVKSPLPPPPPPPPPPLPPAHKDKAAYNPYSGCPAHGGDDGLDG. Over residues 14–28 the composition is skewed to pro residues; sequence PLPPPPPPPPPPLPP. Residues 54-74 traverse the membrane as a helical segment; the sequence is IVLVLRAAAALLALVAMALVA. Residues 75–91 are Extracellular-facing; that stretch reads SCRHGDWMEFTRYQEYR. The helical transmembrane segment at 92–112 threads the bilayer; that stretch reads YLLGVAVVASLYSALQAARTF. Residues 113–127 are Cytoplasmic-facing; sequence RRMRAGTAYAATFLD. A helical transmembrane segment spans residues 128–148; sequence FAGDQAVGYLLITASSAALPI. The Extracellular portion of the chain corresponds to 149–163; it reads TIRMRSAVVNTFTDV. A helical transmembrane segment spans residues 164 to 184; the sequence is VAASISFAFLAFAALAFSALI. At 185–199 the chain is on the cytoplasmic side; it reads AGFRLSSSSSSAYNY.

The protein belongs to the Casparian strip membrane proteins (CASP) family. As to quaternary structure, homodimer and heterodimers.

The protein resides in the cell membrane. The protein is CASP-like protein 4B1 of Oryza sativa subsp. japonica (Rice).